A 215-amino-acid polypeptide reads, in one-letter code: LysM and putative peptidoglycan-binding domain-containing protein 2 (215 aa).

The segment at 1 to 40 (MADSSPAPSLRAGGPREPRPSAPSPPPPHSRLGSEAEEAE) is disordered. A2 is modified (N-acetylalanine). A phosphoserine mark is found at S5, S24, S34, and S58. The span at 20–29 (PSAPSPPPPH) shows a compositional bias: pro residues. The LysM domain occupies 72–116 (VEHRVRAGDTLQGIALKYGVSMEQIKRANKLFTNDCIFLKKTLNI). The tract at residues 194–215 (AKKLKGESRDEEGLYTASLYHS) is disordered.

The protein is LysM and putative peptidoglycan-binding domain-containing protein 2 (LYSMD2) of Bos taurus (Bovine).